The following is a 530-amino-acid chain: Glucocorticoid modulatory element-binding protein 2 (530 aa).

The region spanning 81 to 163 is the SAND domain; it reads EEGENLEAEI…RKIMDSGELD (83 aa). Cys-110 lines the Zn(2+) pocket. 4 residues coordinate DNA: Lys-136, Lys-140, Lys-143, and Arg-154. Lys-155 is covalently cross-linked (Glycyl lysine isopeptide (Lys-Gly) (interchain with G-Cter in SUMO1); alternate). Lys-155 is covalently cross-linked (Glycyl lysine isopeptide (Lys-Gly) (interchain with G-Cter in SUMO2); alternate). Positions 167, 171, and 175 each coordinate Zn(2+). Positions 304 to 348 form a coiled coil; the sequence is QMDRSREQYARDLAALEQQCDEHRRRAKELKHKSQHLSNVLMTLT. A Phosphoserine modification is found at Ser-373.

As to quaternary structure, homodimer, and heterodimer of GMEB1 and GMEB2. GMEB1 and GMEB2 form the parvovirus initiator complex (PIF). Interacts with the glucocorticoid receptor (NR3C1). May interact with CREB-binding protein (CBP). In terms of tissue distribution, expressed in peripheral blood lymphocytes and fetal liver. Expressed preferentially in reproductive and/or developmentally important cells, such as testis, placenta, bone marrow and fetal tissues.

Its subcellular location is the nucleus. The protein localises to the cytoplasm. Its function is as follows. Trans-acting factor that binds to glucocorticoid modulatory elements (GME) present in the TAT (tyrosine aminotransferase) promoter and increases sensitivity to low concentrations of glucocorticoids. Also binds to the transferrin receptor promoter. Essential auxiliary factor for the replication of parvoviruses. The protein is Glucocorticoid modulatory element-binding protein 2 (GMEB2) of Homo sapiens (Human).